Reading from the N-terminus, the 351-residue chain is Phenylalanine--tRNA ligase alpha subunit (351 aa).

Glu-276 contributes to the Mg(2+) binding site.

Belongs to the class-II aminoacyl-tRNA synthetase family. Phe-tRNA synthetase alpha subunit type 1 subfamily. As to quaternary structure, tetramer of two alpha and two beta subunits. The cofactor is Mg(2+).

It localises to the cytoplasm. The catalysed reaction is tRNA(Phe) + L-phenylalanine + ATP = L-phenylalanyl-tRNA(Phe) + AMP + diphosphate + H(+). The chain is Phenylalanine--tRNA ligase alpha subunit from Psychrobacter arcticus (strain DSM 17307 / VKM B-2377 / 273-4).